The sequence spans 333 residues: Fructose-1,6-bisphosphatase class 1 (333 aa).

Residues E92, D114, L116, and D117 each contribute to the Mg(2+) site. Substrate is bound by residues D117 to S120 and N209. Residue E279 participates in Mg(2+) binding.

The protein belongs to the FBPase class 1 family. Homotetramer. Mg(2+) serves as cofactor.

It is found in the cytoplasm. The catalysed reaction is beta-D-fructose 1,6-bisphosphate + H2O = beta-D-fructose 6-phosphate + phosphate. Its pathway is carbohydrate biosynthesis; gluconeogenesis. This chain is Fructose-1,6-bisphosphatase class 1, found in Alkalilimnicola ehrlichii (strain ATCC BAA-1101 / DSM 17681 / MLHE-1).